A 306-amino-acid chain; its full sequence is Probable cobalamin biosynthesis protein CobD (306 aa).

5 helical membrane passes run 54–74, 88–108, 155–175, 215–235, and 286–306; these read LFGFLNVILVLAIVFFMTYEI, ISIYSIILSFSIGHKSLIEFS, ITDSIIAPLIYAAIFGLPGAF, IAGMLLIISAPFYGGNIKSAI, and SLKAVDYSVLLFLIIYTVLLM.

Belongs to the CobD/CbiB family.

It localises to the cell membrane. It functions in the pathway cofactor biosynthesis; adenosylcobalamin biosynthesis. In terms of biological role, converts cobyric acid to cobinamide by the addition of aminopropanol on the F carboxylic group. The protein is Probable cobalamin biosynthesis protein CobD of Methanococcus maripaludis (strain C7 / ATCC BAA-1331).